A 368-amino-acid polypeptide reads, in one-letter code: tRNA-specific 2-thiouridylase MnmA (368 aa).

ATP contacts are provided by residues 11-18 and M37; that span reads GMSGGVDS. The interaction with target base in tRNA stretch occupies residues 97 to 99; that stretch reads NPD. The Nucleophile role is filled by C102. A disulfide bridge links C102 with C199. ATP is bound at residue G127. The interval 149–151 is interaction with tRNA; it reads KDQ. The active-site Cysteine persulfide intermediate is the C199. The interval 311–312 is interaction with tRNA; sequence RY.

Belongs to the MnmA/TRMU family. In terms of assembly, interacts with TusE.

It localises to the cytoplasm. The catalysed reaction is S-sulfanyl-L-cysteinyl-[protein] + uridine(34) in tRNA + AH2 + ATP = 2-thiouridine(34) in tRNA + L-cysteinyl-[protein] + A + AMP + diphosphate + H(+). In terms of biological role, catalyzes the 2-thiolation of uridine at the wobble position (U34) of tRNA(Lys), tRNA(Glu) and tRNA(Gln), leading to the formation of s(2)U34, the first step of tRNA-mnm(5)s(2)U34 synthesis. Sulfur is provided by IscS, via a sulfur-relay system. Binds ATP and its substrate tRNAs. The protein is tRNA-specific 2-thiouridylase MnmA of Shigella dysenteriae serotype 1 (strain Sd197).